Reading from the N-terminus, the 234-residue chain is Flagellar L-ring protein (234 aa).

An N-terminal signal peptide occupies residues 1-15 (MRYAVICMLLLAASG). A lipid anchor (N-palmitoyl cysteine) is attached at Cys16. Residue Cys16 is the site of S-diacylglycerol cysteine attachment.

Belongs to the FlgH family. In terms of assembly, the basal body constitutes a major portion of the flagellar organelle and consists of four rings (L,P,S, and M) mounted on a central rod.

The protein resides in the cell outer membrane. It is found in the bacterial flagellum basal body. Assembles around the rod to form the L-ring and probably protects the motor/basal body from shearing forces during rotation. In Oleidesulfovibrio alaskensis (strain ATCC BAA-1058 / DSM 17464 / G20) (Desulfovibrio alaskensis), this protein is Flagellar L-ring protein.